A 227-amino-acid polypeptide reads, in one-letter code: Octanoyltransferase (227 aa).

Residues 31–209 (ANTIDEIWLV…VFLSLLGGTN (179 aa)) form the BPL/LPL catalytic domain. Substrate is bound by residues 71–78 (RGGKITYH), 139–141 (SIG), and 152–154 (GLA). The active-site Acyl-thioester intermediate is the cysteine 170.

It belongs to the LipB family.

The protein resides in the cytoplasm. The catalysed reaction is octanoyl-[ACP] + L-lysyl-[protein] = N(6)-octanoyl-L-lysyl-[protein] + holo-[ACP] + H(+). Its pathway is protein modification; protein lipoylation via endogenous pathway; protein N(6)-(lipoyl)lysine from octanoyl-[acyl-carrier-protein]: step 1/2. Its function is as follows. Catalyzes the transfer of endogenously produced octanoic acid from octanoyl-acyl-carrier-protein onto the lipoyl domains of lipoate-dependent enzymes. Lipoyl-ACP can also act as a substrate although octanoyl-ACP is likely to be the physiological substrate. This is Octanoyltransferase from Baumannia cicadellinicola subsp. Homalodisca coagulata.